Reading from the N-terminus, the 1100-residue chain is Exportin-T (1100 aa).

This sequence belongs to the exportin family. As to quaternary structure, interacts with CEX1, GSP1, GSP2, NSP1, NUP2 and UTP8.

Its subcellular location is the nucleus. It localises to the cytoplasm. Its function is as follows. tRNA nucleus export receptor which facilitates tRNA translocation across the nuclear pore complex. Preferentially interacts with tRNAs with mature 5'- and 3'-termini and does not distinguish between intron-containing and spliced tRNAs. In the nucleus binds to tRNA and to the Ran-GTPases GSP1 or GSP2 in their active GTP-bound form. Docking of this trimeric complex to the nuclear pore complex (NPC) is mediated through binding to nucleoporins. Upon transit of a nuclear export complex into the cytoplasm, disassembling of the complex and hydrolysis of Ran-GTP to Ran-GDP cause release of the tRNA from the export receptor. The directionality of nuclear export is thought to be conferred by an asymmetric distribution of the GTP- and GDP-bound forms of Ran between the cytoplasm and nucleus. The chain is Exportin-T (LOS1) from Saccharomyces cerevisiae (strain ATCC 204508 / S288c) (Baker's yeast).